The chain runs to 403 residues: Acetylornithine aminotransferase (403 aa).

Pyridoxal 5'-phosphate contacts are provided by residues 107–108 (GA) and Phe-140. Arg-143 serves as a coordination point for N(2)-acetyl-L-ornithine. 225–228 (DEVQ) lines the pyridoxal 5'-phosphate pocket. Lys-254 is modified (N6-(pyridoxal phosphate)lysine). Ser-282 is a binding site for N(2)-acetyl-L-ornithine. Thr-283 lines the pyridoxal 5'-phosphate pocket.

This sequence belongs to the class-III pyridoxal-phosphate-dependent aminotransferase family. ArgD subfamily. Homodimer. It depends on pyridoxal 5'-phosphate as a cofactor.

It is found in the cytoplasm. It carries out the reaction N(2)-acetyl-L-ornithine + 2-oxoglutarate = N-acetyl-L-glutamate 5-semialdehyde + L-glutamate. It participates in amino-acid biosynthesis; L-arginine biosynthesis; N(2)-acetyl-L-ornithine from L-glutamate: step 4/4. This chain is Acetylornithine aminotransferase, found in Vibrio parahaemolyticus serotype O3:K6 (strain RIMD 2210633).